Here is a 369-residue protein sequence, read N- to C-terminus: MNAIESIEVALDTLPENRSYSIHIGQGLLSRMDLLLPHLPGKKAAIVTNTTIAPLYLEKLRSALAEHHVETFAITLPDGERYKHWETLNLIFDALLEHRCERRTPLIALGGGVIGDLTGFAAATYLRGVPFIQIPTTLLAQVDSSVGGKTGINHPLGKNMIGAFYQPQLVLTDSATLTTLPDRELRAGIAEIIKYGLIYDADFFDWLEQHMNSLLARDPAAVNYAIRRSCEIKAEIVSLDERESGLRALLNLGHTFGHAIENAMGYGAWLHGEAVAAGTLMAADLSRRLQRITSQEVDRIRYLFENTGLPVKGPRISPERYLESMQLDKKVKEGAIRFILLDSIGKASPGDTVPTPLLLETLSACVADA.

NAD(+)-binding positions include 78 to 83, 112 to 116, 136 to 137, K149, K158, and 176 to 179; these read DGERYK, GVIGD, TT, and TLTT. The Zn(2+) site is built by E191, H254, and H271.

Belongs to the sugar phosphate cyclases superfamily. Dehydroquinate synthase family. Requires NAD(+) as cofactor. The cofactor is Co(2+). Zn(2+) is required as a cofactor.

Its subcellular location is the cytoplasm. The catalysed reaction is 7-phospho-2-dehydro-3-deoxy-D-arabino-heptonate = 3-dehydroquinate + phosphate. It functions in the pathway metabolic intermediate biosynthesis; chorismate biosynthesis; chorismate from D-erythrose 4-phosphate and phosphoenolpyruvate: step 2/7. Its function is as follows. Catalyzes the conversion of 3-deoxy-D-arabino-heptulosonate 7-phosphate (DAHP) to dehydroquinate (DHQ). The polypeptide is 3-dehydroquinate synthase (Nitrosomonas europaea (strain ATCC 19718 / CIP 103999 / KCTC 2705 / NBRC 14298)).